A 108-amino-acid polypeptide reads, in one-letter code: UPF0102 protein Shewmr4_3685 (108 aa).

It belongs to the UPF0102 family.

The protein is UPF0102 protein Shewmr4_3685 of Shewanella sp. (strain MR-4).